A 288-amino-acid polypeptide reads, in one-letter code: Diaminopimelate epimerase (288 aa).

Positions 14 and 67 each coordinate substrate. Residue Cys-76 is the Proton donor of the active site. Residues 77–78 (GN), Asn-166, Asn-199, and 217–218 (ER) contribute to the substrate site. Cys-226 acts as the Proton acceptor in catalysis. A substrate-binding site is contributed by 227 to 228 (GT).

The protein belongs to the diaminopimelate epimerase family. In terms of assembly, homodimer.

The protein localises to the cytoplasm. It catalyses the reaction (2S,6S)-2,6-diaminopimelate = meso-2,6-diaminopimelate. Its pathway is amino-acid biosynthesis; L-lysine biosynthesis via DAP pathway; DL-2,6-diaminopimelate from LL-2,6-diaminopimelate: step 1/1. Functionally, catalyzes the stereoinversion of LL-2,6-diaminopimelate (L,L-DAP) to meso-diaminopimelate (meso-DAP), a precursor of L-lysine and an essential component of the bacterial peptidoglycan. In Bacillus anthracis (strain A0248), this protein is Diaminopimelate epimerase.